The chain runs to 172 residues: Adenine phosphoribosyltransferase (172 aa).

The protein belongs to the purine/pyrimidine phosphoribosyltransferase family. In terms of assembly, homodimer.

Its subcellular location is the cytoplasm. It catalyses the reaction AMP + diphosphate = 5-phospho-alpha-D-ribose 1-diphosphate + adenine. Its pathway is purine metabolism; AMP biosynthesis via salvage pathway; AMP from adenine: step 1/1. Functionally, catalyzes a salvage reaction resulting in the formation of AMP, that is energically less costly than de novo synthesis. The sequence is that of Adenine phosphoribosyltransferase from Clostridium botulinum (strain Eklund 17B / Type B).